The sequence spans 560 residues: Choline/ethanolamine transporter FLVCR1 (560 aa).

The tract at residues 1–43 (MARPDDEVGPAVAPGHPLGKGYLPVPKGAPDGEARLVPQNGPE) is disordered. Over 1-92 (MARPDDEVGP…EDVPCPACPP (92 aa)) the chain is Cytoplasmic. Residues 93-117 (RTALSPRRFVVLLIFSLYSLVNAFQ) traverse the membrane as a helical segment. At 118–135 (WIQYSSISNVFEDFYEVS) the chain is on the extracellular side. The helical transmembrane segment at 136–163 (PLHINWLSMVYMVAYVPLIFPATWLLDT) threads the bilayer. Topologically, residues 164–165 (RG) are cytoplasmic. The chain crosses the membrane as a helical span at residues 166–185 (LRLTALLGSGLNCLGAWVKC). The Extracellular segment spans residues 186–192 (GSVQRHL). A helical transmembrane segment spans residues 193-221 (FWVTMLGQILCSVAQVFILGLPSPVASVW). Glutamine 207 serves as a coordination point for ethanolamine. Over 222-226 (FGPKE) the chain is Cytoplasmic. Residues 227-252 (VSTACATAVLGNQLGTAVGFLLPPVL) traverse the membrane as a helical segment. At 253–270 (VPALGTQNNTGLLAHTQN) the chain is on the extracellular side. Residue asparagine 270 is glycosylated (N-linked (GlcNAc...) asparagine). The helical transmembrane segment at 271-300 (NTDLLAHNINTMFYGTAFISTFLFFLTVIA) threads the bilayer. Topologically, residues 301-336 (FKEKPPLPPSQAQAILRDSPPEEYSYKSSIWNLCRN) are cytoplasmic. Residues 337–367 (IPFVLLLVSYGIMTGAFYSISTLLNQIILTY) form a helical membrane-spanning segment. The Extracellular segment spans residues 368 to 371 (YVGE). Residues 372–400 (EVNAGRIGLTLVVAGMVGSILCGLWLDYT) traverse the membrane as a helical segment. The Cytoplasmic portion of the chain corresponds to 401-402 (KT). A helical membrane pass occupies residues 403-425 (YKQTTLIVYVLSFIGMLIFTFTL). Topologically, residues 426-428 (NLG) are extracellular. Residues 429-458 (YIVALFFTGGILGFFMTGYLPLGFEFAVEI) form a helical membrane-spanning segment. Residues 459–466 (TYPESEGM) are Cytoplasmic-facing. The chain crosses the membrane as a helical span at residues 467–492 (SSGLLNTAAQILGIFFTLAQGKITTD). Glutamine 476 serves as a coordination point for ethanolamine. Glutamine 476 is a binding site for choline. The Extracellular segment spans residues 493–495 (YNS). Residues 496 to 518 (PEAGNIFLCAWMFVGIILTALIK) traverse the membrane as a helical segment. The Cytoplasmic segment spans residues 519–560 (SDLRRHNINTGLTNIDVKAVPVDSRVDPKPKAMVSIQSESSL). Residue serine 542 is modified to Phosphoserine.

Belongs to the major facilitator superfamily. Feline leukemia virus subgroup C receptor (TC 2.A.1.28.1) family.

The protein resides in the cell membrane. The catalysed reaction is choline(out) = choline(in). The enzyme catalyses ethanolamine(in) = ethanolamine(out). It carries out the reaction heme b(in) = heme b(out). Uniporter that mediates the transport of extracellular choline and ethanolamine into cells, thereby playing a key role in phospholipid biosynthesis. Choline and ethanolamine are the precursors of phosphatidylcholine and phosphatidylethanolamine, respectively, the two most abundant phospholipids. Transport is not coupled with proton transport and is exclusively driven by the choline (or ethanolamine) gradient across the plasma membrane. Also acts as a heme b transporter that mediates heme efflux from the cytoplasm to the extracellular compartment. This Mus terricolor (Earth-colored mouse) protein is Choline/ethanolamine transporter FLVCR1 (Flvcr1).